A 24-amino-acid chain; its full sequence is Cytochrome c3-2 (24 aa).

Positions 1–24 (GNAPAADMVLKAPGDAKMTKTAVP) are disordered.

In terms of processing, binds 4 heme groups per subunit.

The protein localises to the periplasm. In terms of biological role, participates in sulfate respiration coupled with phosphorylation by transferring electrons from the enzyme dehydrogenase to ferredoxin. In Nitratidesulfovibrio vulgaris (Desulfovibrio vulgaris), this protein is Cytochrome c3-2.